Consider the following 65-residue polypeptide: Large ribosomal subunit protein bL35 (65 aa).

Residues 1-26 (MPKMKSNKGASKRFKKTASGGFKCKQ) are disordered.

It belongs to the bacterial ribosomal protein bL35 family.

In Idiomarina loihiensis (strain ATCC BAA-735 / DSM 15497 / L2-TR), this protein is Large ribosomal subunit protein bL35.